A 122-amino-acid chain; its full sequence is Large ribosomal subunit protein uL14 (122 aa).

The protein belongs to the universal ribosomal protein uL14 family. As to quaternary structure, part of the 50S ribosomal subunit. Forms a cluster with proteins L3 and L19. In the 70S ribosome, L14 and L19 interact and together make contacts with the 16S rRNA in bridges B5 and B8.

Binds to 23S rRNA. Forms part of two intersubunit bridges in the 70S ribosome. In Chlamydia trachomatis serovar L2 (strain ATCC VR-902B / DSM 19102 / 434/Bu), this protein is Large ribosomal subunit protein uL14.